Consider the following 70-residue polypeptide: Guanine nucleotide-binding protein subunit gamma-1 (70 aa).

Cysteine 67 is subject to Cysteine methyl ester. Residue cysteine 67 is the site of S-geranylgeranyl cysteine attachment. Residues 68–70 constitute a propeptide, removed in mature form; it reads TVL.

This sequence belongs to the G protein gamma family. In terms of assembly, g proteins are composed of 3 units, alpha, beta and gamma. As to expression, predominantly expressed in the central nervous system.

It localises to the cell membrane. Its function is as follows. Guanine nucleotide-binding proteins (G proteins) are involved as a modulator or transducer in various transmembrane signaling systems. The beta and gamma chains are required for the GTPase activity, for replacement of GDP by GTP, and for G protein-effector interaction. The protein is Guanine nucleotide-binding protein subunit gamma-1 (Ggamma1) of Drosophila melanogaster (Fruit fly).